Here is a 227-residue protein sequence, read N- to C-terminus: NAD(P)H-quinone oxidoreductase subunit K, chloroplastic (227 aa).

4 residues coordinate [4Fe-4S] cluster: Cys-43, Cys-44, Cys-108, and Cys-139.

The protein belongs to the complex I 20 kDa subunit family. NDH is composed of at least 16 different subunits, 5 of which are encoded in the nucleus. The cofactor is [4Fe-4S] cluster.

The protein localises to the plastid. The protein resides in the chloroplast thylakoid membrane. The catalysed reaction is a plastoquinone + NADH + (n+1) H(+)(in) = a plastoquinol + NAD(+) + n H(+)(out). The enzyme catalyses a plastoquinone + NADPH + (n+1) H(+)(in) = a plastoquinol + NADP(+) + n H(+)(out). NDH shuttles electrons from NAD(P)H:plastoquinone, via FMN and iron-sulfur (Fe-S) centers, to quinones in the photosynthetic chain and possibly in a chloroplast respiratory chain. It has NADH- and deamino-NADH-specific dehydrogenase activity, using ferricyanide or quinones as acceptors. The immediate electron acceptor for the enzyme in this species is believed to be plastoquinone. Couples the redox reaction to proton translocation, and thus conserves the redox energy in a proton gradient. The chain is NAD(P)H-quinone oxidoreductase subunit K, chloroplastic from Pisum sativum (Garden pea).